Reading from the N-terminus, the 265-residue chain is MNNCQLPLSDVQSRQDHRRLDIDKVGVKNIRYPIVVKDRSVGSQSTTARINMYVNLPHQFKGTHMSRFLEVLAENQRAISIENLPKLLKEVKQRLDAEEAHIELDFPYFITKKAPVSGVEALMDYQVHFSGVMRGNAYQLTLTVEVPVTSLCPCSKEISAYGAHNQRSHVKVSVQFSQFVWIEEVVDLVERNASCELFTILKRPDEKFVTEKAYDNPKFVEDMVRDLADELTHDPRISWFAVESENFESIHNHSAYAFIEGGQRS.

This sequence belongs to the GTP cyclohydrolase IV family.

The catalysed reaction is GTP + H2O = 7,8-dihydroneopterin 3'-triphosphate + formate + H(+). Its pathway is cofactor biosynthesis; 7,8-dihydroneopterin triphosphate biosynthesis; 7,8-dihydroneopterin triphosphate from GTP: step 1/1. Converts GTP to 7,8-dihydroneopterin triphosphate. In Magnetococcus marinus (strain ATCC BAA-1437 / JCM 17883 / MC-1), this protein is GTP cyclohydrolase FolE2.